A 180-amino-acid chain; its full sequence is SPbeta prophage-derived uncharacterized protein YosC (180 aa).

In Bacillus subtilis (strain 168), this protein is SPbeta prophage-derived uncharacterized protein YosC (yosC).